Consider the following 222-residue polypeptide: Histidinol-phosphatase (222 aa).

Residue D8 is the Nucleophile of the active site. Mg(2+) contacts are provided by D8, D10, and D184. The active-site Proton donor is the D10.

This sequence belongs to the HAD-like hydrolase superfamily. SerB family. Requires Mg(2+) as cofactor.

It catalyses the reaction L-histidinol phosphate + H2O = L-histidinol + phosphate. It functions in the pathway amino-acid biosynthesis; L-histidine biosynthesis; L-histidine from 5-phospho-alpha-D-ribose 1-diphosphate: step 8/9. Functionally, catalyzes the dephosphorylation of histidinol-phosphate to histidinol, the direct precursor of histidine. The protein is Histidinol-phosphatase of Neisseria meningitidis serogroup C (strain 8013).